The chain runs to 597 residues: NADPH-dependent diflavin oxidoreductase 1 (597 aa).

Positions 6–150 constitute a Flavodoxin-like domain; the sequence is LLVLFGSQTG…AVDPWLRDLW (145 aa). Residues 12 to 17, 59 to 62, 97 to 106, and Asp132 contribute to the FMN site; these read SQTGTA, ATTG, and LGDSSYAKFN. A disordered region spans residues 188-207; sequence GSEGQRVAHPGSQEPPSESK. An FAD-binding FR-type domain is found at 206 to 447; the sequence is SKPFLAPMIS…VRPGSLAFPE (242 aa). FAD is bound by residues Arg350, 382–385, and 416–419; these read RAFS and GLCS. Residues Thr460, 515–516, 521–525, and Asp558 each bind NADP(+); these read SR and KVYVQ. Trp596 is an FAD binding site.

Belongs to the NADPH-dependent diflavin oxidoreductase NDOR1 family. This sequence in the N-terminal section; belongs to the flavodoxin family. It in the C-terminal section; belongs to the flavoprotein pyridine nucleotide cytochrome reductase family. In terms of assembly, interacts with CIAPIN1; as part of the cytosolic iron-sulfur (Fe-S) protein assembly (CIA) machinery. Interacts with DCPS. The cofactor is FAD. Requires FMN as cofactor. Low expression in brain, heart, kidney, pancreas, prostate and skeletal muscle. Highest levels in the placenta. Expressed in cancer cell lines including promyelocytic leukemia, HeLaS3, chronic myelagenous leukemia, lymphoblastic leukemia, Burkitt's lymphoma, colorectal adenocarcinoma, lung carcinoma, and melanoma G-361.

It is found in the cytoplasm. Its subcellular location is the perinuclear region. It catalyses the reaction 2 oxidized [2Fe-2S]-[protein] + NADPH = 2 reduced [2Fe-2S]-[protein] + NADP(+) + H(+). Functionally, NADPH-dependent reductase which is a central component of the cytosolic iron-sulfur (Fe-S) protein assembly (CIA) machinery. Transfers electrons from NADPH via its FAD and FMN prosthetic groups to the [2Fe-2S] cluster of CIAPIN1, another key component of the CIA machinery. In turn, this reduced cluster provides electrons for assembly of cytosolic iron-sulfur cluster proteins. It can also reduce the [2Fe-2S] cluster of CISD1 and activate this protein implicated in Fe/S cluster repair. In vitro can fully activate methionine synthase/MTR in the presence of soluble cytochrome b5/CYB5A. This Homo sapiens (Human) protein is NADPH-dependent diflavin oxidoreductase 1.